Reading from the N-terminus, the 47-residue chain is Lysis protein for colicins E2 and E3 (47 aa).

Residues M1–A19 form the signal peptide. The N-palmitoyl cysteine moiety is linked to residue C20. A lipid anchor (S-diacylglycerol cysteine) is attached at C20.

The protein localises to the cell outer membrane. Functionally, lysis proteins are required for both colicin release and partial cell lysis. This is Lysis protein for colicins E2 and E3 (hic) from Escherichia coli.